Here is an 806-residue protein sequence, read N- to C-terminus: Acetyl-CoA decarbonylase/synthase complex subunit alpha 1 (806 aa).

Positions 73, 76, 77, 79, 84, and 94 each coordinate [4Fe-4S] cluster. His117 lines the CO pocket. 3 residues coordinate [Ni-4Fe-4S] cluster: His250, Cys278, and Cys323. 2 consecutive 4Fe-4S ferredoxin-type domains span residues 407-436 (DEQM…IPEA) and 445-475 (YSYL…LSVI). Residues Cys417, Cys420, Cys423, Cys427, Cys455, Cys458, Cys461, and Cys465 each coordinate [4Fe-4S] cluster. The [Ni-4Fe-4S] cluster site is built by Cys523, Cys552, and Cys587.

The protein belongs to the Ni-containing carbon monoxide dehydrogenase family. As to quaternary structure, heterotetramer of two alpha and two epsilon subunits. The ACDS complex is made up of alpha, epsilon, beta, gamma and delta subunits with a probable stoichiometry of (alpha(2)epsilon(2))(4)-beta(8)-(gamma(1)delta(1))(8). The cofactor is [4Fe-4S] cluster. It depends on [Ni-4Fe-4S] cluster as a cofactor.

The enzyme catalyses CO + 2 oxidized [2Fe-2S]-[ferredoxin] + H2O = 2 reduced [2Fe-2S]-[ferredoxin] + CO2 + 2 H(+). Its pathway is one-carbon metabolism; methanogenesis from acetate. In terms of biological role, part of the ACDS complex that catalyzes the reversible cleavage of acetyl-CoA, allowing growth on acetate as sole source of carbon and energy. The alpha-epsilon subcomponent functions as a carbon monoxide dehydrogenase. The sequence is that of Acetyl-CoA decarbonylase/synthase complex subunit alpha 1 from Methanosarcina thermophila.